The following is a 330-amino-acid chain: Protein IN CHLOROPLAST ATPASE BIOGENESIS, chloroplastic (330 aa).

A chloroplast-targeting transit peptide spans 1 to 35; it reads MGSISMHITPSTALPIRHFRARVSCCSSGHVSFIK.

As to quaternary structure, interacts with ATPC1.

Its subcellular location is the plastid. It localises to the chloroplast stroma. Involved in the assembly of the F(1) ATP synthase in chloroplast thylakoid membranes. Functions downstream of the CPN60 chaperones to promote assembly of the catalytically active core of the chloroplast ATP synthase. Assists the assembly of the ATP synthase gamma subunit into the active F(1) core downstream of CPN60-mediated folding, which is critical for the biogenesis of the chloroplast ATP synthase. This Arabidopsis thaliana (Mouse-ear cress) protein is Protein IN CHLOROPLAST ATPASE BIOGENESIS, chloroplastic.